A 347-amino-acid polypeptide reads, in one-letter code: FMRFamide-related peptides (347 aa).

The first 22 residues, 1 to 22 (MGIALMFLLALYQMQSAIHSEI), serve as a signal peptide directing secretion. Residues 23–102 (IDTPNYAGNS…RYKYDPELEA (80 aa)) constitute a propeptide that is removed on maturation. Residue Phe114 is modified to Phenylalanine amide. Tyrosine amide is present on Tyr146. Phenylalanine amide is present on residues Phe157, Phe168, Phe179, Phe190, Phe201, Phe212, Phe223, and Phe232. Residues 235–240 (SPHEEL) constitute a propeptide that is removed on maturation. Residues Phe250 and Phe259 each carry the phenylalanine amide modification. Serine amide is present on Ser270. Position 280 is a phenylalanine amide (Phe280). Positions 283–347 (SLKPAAPESK…SVEQDQFFGQ (65 aa)) are excised as a propeptide. Positions 283–347 (SLKPAAPESK…SVEQDQFFGQ (65 aa)) are disordered. Residues 305-320 (SPVDKAMTELFKKQEL) show a composition bias toward basic and acidic residues. Residues 321-347 (QDQQVKNGAQATTTQDGSVEQDQFFGQ) show a composition bias toward polar residues.

The protein belongs to the FARP (FMRFamide related peptide) family. Post-translationally, this precursor includes 13 peptides that have FMRF or related sequences at their C-termini, and other putative neuropeptides.

It localises to the secreted. Its function is as follows. In insects, FMRFamide and related peptides have modulatory actions at skeletal neuromuscular junctions, and peptides that are immunologically related to FMRFamide are released into the circulation from neurohemal organs. The protein is FMRFamide-related peptides of Drosophila melanogaster (Fruit fly).